We begin with the raw amino-acid sequence, 178 residues long: Gamma-crystallin S (178 aa).

Ser2 is modified (N-acetylserine). Residues 2-5 are N-terminal arm; the sequence is SKSV. Beta/gamma crystallin 'Greek key' domains follow at residues 6-44 and 45-87; these read AKIT…RVTG and GAWV…KVIH. The connecting peptide stretch occupies residues 88–93; it reads LSSGGQ. 2 consecutive Beta/gamma crystallin 'Greek key' domains span residues 94–134 and 135–177; these read YKLQ…KVLD and GVWV…RRIM.

The protein belongs to the beta/gamma-crystallin family. In terms of assembly, monomer.

Its function is as follows. Crystallins are the dominant structural components of the vertebrate eye lens. The protein is Gamma-crystallin S (CRYGS) of Macropus fuliginosus (Western gray kangaroo).